The chain runs to 416 residues: CBL-interacting serine/threonine-protein kinase 21 (416 aa).

Residues 12 to 264 enclose the Protein kinase domain; that stretch reads YEIGRTIGEG…AEIIIKDSWF (253 aa). ATP is bound by residues 18 to 26 and K41; that span reads IGEGNFAKV. The active-site Proton acceptor is D134. The segment at 152–178 is activation loop; sequence DFGLSAVPKSGDMLSTACGSPCYIAPE. A Phosphoserine modification is found at S156. T167 is subject to Phosphothreonine. The NAF domain maps to 291 to 315; sequence ASSNFINAFQIIAMSSDLDLSGLFE. The segment at 321-351 is PPI; sequence RYKTRIGSKNTAQETIKKIEAAATYVSLSVE.

It belongs to the protein kinase superfamily. CAMK Ser/Thr protein kinase family. SNF1 subfamily. In terms of assembly, interacts with CBL9. Mn(2+) serves as cofactor.

It carries out the reaction L-seryl-[protein] + ATP = O-phospho-L-seryl-[protein] + ADP + H(+). It catalyses the reaction L-threonyl-[protein] + ATP = O-phospho-L-threonyl-[protein] + ADP + H(+). In terms of biological role, CIPK serine-threonine protein kinases interact with CBL proteins. Binding of a CBL protein to the regulatory NAF domain of CIPK protein lead to the activation of the kinase in a calcium-dependent manner. The protein is CBL-interacting serine/threonine-protein kinase 21 (CIPK21) of Arabidopsis thaliana (Mouse-ear cress).